A 343-amino-acid polypeptide reads, in one-letter code: tRNA N6-adenosine threonylcarbamoyltransferase (343 aa).

2 residues coordinate Fe cation: H120 and H124. Substrate is bound by residues 142–146, D175, G188, D192, and N281; that span reads VVSGG. Residue D310 participates in Fe cation binding.

Belongs to the KAE1 / TsaD family. Fe(2+) serves as cofactor.

The protein localises to the cytoplasm. It catalyses the reaction L-threonylcarbamoyladenylate + adenosine(37) in tRNA = N(6)-L-threonylcarbamoyladenosine(37) in tRNA + AMP + H(+). Its function is as follows. Required for the formation of a threonylcarbamoyl group on adenosine at position 37 (t(6)A37) in tRNAs that read codons beginning with adenine. Is involved in the transfer of the threonylcarbamoyl moiety of threonylcarbamoyl-AMP (TC-AMP) to the N6 group of A37, together with TsaE and TsaB. TsaD likely plays a direct catalytic role in this reaction. This is tRNA N6-adenosine threonylcarbamoyltransferase from Bacillus thuringiensis (strain Al Hakam).